The primary structure comprises 1019 residues: Photoactivated adenylate cyclase subunit alpha-like protein FB (1019 aa).

The region spanning Leu55–Lys148 is the BLUF 1 domain. The Guanylate cyclase 1 domain maps to Val204–Thr332. The 93-residue stretch at Leu467–Thr559 folds into the BLUF 2 domain. One can recognise a Guanylate cyclase 2 domain in the interval Val615–Val744. The segment covering Ala825 to Pro839 has biased composition (low complexity). Residues Ala825–Asp862 form a disordered region. The span at Arg846–Pro855 shows a compositional bias: polar residues.

The protein belongs to the adenylyl cyclase class-4/guanylyl cyclase family. Heterotetramer of two alpha and two beta subunits.

Its subcellular location is the cell projection. It localises to the cilium. The protein localises to the flagellum. This is Photoactivated adenylate cyclase subunit alpha-like protein FB from Euglena gracilis.